A 120-amino-acid polypeptide reads, in one-letter code: NAD(P)H-quinone oxidoreductase subunit 3, chloroplastic (120 aa).

3 helical membrane passes run 7–27 (YETF…AFLI), 64–84 (MFAL…PWAM), and 88–108 (ILGI…IVGS).

It belongs to the complex I subunit 3 family. As to quaternary structure, NDH is composed of at least 16 different subunits, 5 of which are encoded in the nucleus.

It localises to the plastid. The protein resides in the chloroplast thylakoid membrane. The catalysed reaction is a plastoquinone + NADH + (n+1) H(+)(in) = a plastoquinol + NAD(+) + n H(+)(out). The enzyme catalyses a plastoquinone + NADPH + (n+1) H(+)(in) = a plastoquinol + NADP(+) + n H(+)(out). Functionally, NDH shuttles electrons from NAD(P)H:plastoquinone, via FMN and iron-sulfur (Fe-S) centers, to quinones in the photosynthetic chain and possibly in a chloroplast respiratory chain. The immediate electron acceptor for the enzyme in this species is believed to be plastoquinone. Couples the redox reaction to proton translocation, and thus conserves the redox energy in a proton gradient. The chain is NAD(P)H-quinone oxidoreductase subunit 3, chloroplastic from Cycas taitungensis (Prince sago).